Here is a 147-residue protein sequence, read N- to C-terminus: Myoglobin (147 aa).

One can recognise a Globin domain in the interval 2–141 (ADHDLVLKCW…VIGDIDGYYK (140 aa)). His60 serves as a coordination point for nitrite. Residue His60 participates in O2 binding. His89 is a binding site for heme b.

This sequence belongs to the globin family. Monomeric.

It localises to the cytoplasm. The protein localises to the sarcoplasm. The enzyme catalyses Fe(III)-heme b-[protein] + nitric oxide + H2O = Fe(II)-heme b-[protein] + nitrite + 2 H(+). It carries out the reaction H2O2 + AH2 = A + 2 H2O. Functionally, monomeric heme protein which primary function is to store oxygen and facilitate its diffusion within muscle tissues. Reversibly binds oxygen through a pentacoordinated heme iron and enables its timely and efficient release as needed during periods of heightened demand. Depending on the oxidative conditions of tissues and cells, and in addition to its ability to bind oxygen, it also has a nitrite reductase activity whereby it regulates the production of bioactive nitric oxide. Under stress conditions, like hypoxia and anoxia, it also protects cells against reactive oxygen species thanks to its pseudoperoxidase activity. This Danio rerio (Zebrafish) protein is Myoglobin (mb).